The following is an 842-amino-acid chain: Oxysterol-binding protein-related protein 7 (842 aa).

The segment at 1-28 (MDFQERDPPFLPESAQSSKPSSAQQASE) is disordered. Positions 14-27 (SAQSSKPSSAQQAS) are enriched in low complexity. The PH domain maps to 47 to 142 (PERQEGHLLK…WVAQLRAHRL (96 aa)). Residue Thr-171 is modified to Phosphothreonine. A phosphoserine mark is found at Ser-217, Ser-226, Ser-256, and Ser-272. Positions 330-369 (DMHQGSELSRMGVSEASTGQRRLHSLSTSSDTTADSFSSL) are disordered. Residues 354 to 369 (SLSTSSDTTADSFSSL) are compositionally biased toward low complexity.

This sequence belongs to the OSBP family. Expressed in epithelium of small and large intestines (at protein level). Expressed in stomach, duodenum, jejunum, ascending colon, spleen, thymus, lymph node, trachea and leukocytes.

It localises to the cytoplasm. The protein localises to the cytosol. The protein resides in the endoplasmic reticulum membrane. Its subcellular location is the cell membrane. This Homo sapiens (Human) protein is Oxysterol-binding protein-related protein 7 (OSBPL7).